We begin with the raw amino-acid sequence, 435 residues long: 5-methylthioadenosine/S-adenosylhomocysteine deaminase (435 aa).

Residues His-65 and His-67 each coordinate Zn(2+). 3 residues coordinate substrate: Glu-94, Arg-150, and His-189. His-216 serves as a coordination point for Zn(2+). Glu-219 and Asp-304 together coordinate substrate. Asp-304 lines the Zn(2+) pocket.

This sequence belongs to the metallo-dependent hydrolases superfamily. MTA/SAH deaminase family. Zn(2+) is required as a cofactor.

It carries out the reaction S-adenosyl-L-homocysteine + H2O + H(+) = S-inosyl-L-homocysteine + NH4(+). It catalyses the reaction S-methyl-5'-thioadenosine + H2O + H(+) = S-methyl-5'-thioinosine + NH4(+). Its function is as follows. Catalyzes the deamination of 5-methylthioadenosine and S-adenosyl-L-homocysteine into 5-methylthioinosine and S-inosyl-L-homocysteine, respectively. Is also able to deaminate adenosine. The chain is 5-methylthioadenosine/S-adenosylhomocysteine deaminase from Bacillus thuringiensis (strain Al Hakam).